The primary structure comprises 318 residues: Thymidylate synthase (318 aa).

Residues R25 and 180–181 contribute to the dUMP site; that span reads RR. Catalysis depends on C200, which acts as the Nucleophile. Residues 220–223, N231, and 261–263 contribute to the dUMP site; these read RSGD and HIY. D223 contacts (6R)-5,10-methylene-5,6,7,8-tetrahydrofolate. A317 lines the (6R)-5,10-methylene-5,6,7,8-tetrahydrofolate pocket.

It belongs to the thymidylate synthase family. Bacterial-type ThyA subfamily. Homodimer.

The protein resides in the cytoplasm. The catalysed reaction is dUMP + (6R)-5,10-methylene-5,6,7,8-tetrahydrofolate = 7,8-dihydrofolate + dTMP. It functions in the pathway pyrimidine metabolism; dTTP biosynthesis. Its function is as follows. Catalyzes the reductive methylation of 2'-deoxyuridine-5'-monophosphate (dUMP) to 2'-deoxythymidine-5'-monophosphate (dTMP) while utilizing 5,10-methylenetetrahydrofolate (mTHF) as the methyl donor and reductant in the reaction, yielding dihydrofolate (DHF) as a by-product. This enzymatic reaction provides an intracellular de novo source of dTMP, an essential precursor for DNA biosynthesis. The sequence is that of Thymidylate synthase from Bacillus cereus (strain ZK / E33L).